The sequence spans 204 residues: Ras-related and estrogen-regulated growth inhibitor-like protein (204 aa).

The small GTPase-like stretch occupies residues 1 to 204; that stretch reads MNDVKLTVLG…NVFGKRRKSV (204 aa). GTP is bound by residues 10 to 17, 57 to 63, and 122 to 125; these read GGEGTGKS, DPCSQPQ, and NKQD.

Belongs to the small GTPase superfamily. Ras family.

The enzyme catalyses GTP + H2O = GDP + phosphate + H(+). Its function is as follows. Binds GDP/GTP and may possess intrinsic GTPase activity. The protein is Ras-related and estrogen-regulated growth inhibitor-like protein (RERGL) of Bos taurus (Bovine).